Here is a 1062-residue protein sequence, read N- to C-terminus: Translation initiation factor IF-2 (1062 aa).

The interval Ser34 to Asn463 is disordered. Pro residues predominate over residues Pro76–Ala121. Low complexity predominate over residues Ser122–Val153. Positions Pro154–Gly178 are enriched in pro residues. A compositionally biased stretch (gly residues) spans Thr198–Ala214. The span at Arg294–Gly305 shows a compositional bias: pro residues. Gly residues-rich tracts occupy residues Pro307–Gly324 and Pro344–Gly430. The span at Arg431–Lys442 shows a compositional bias: basic residues. The 173-residue stretch at Ser555–Asp727 folds into the tr-type G domain. The interval Gly564–Thr571 is G1. Gly564–Thr571 serves as a coordination point for GTP. The G2 stretch occupies residues Gly589–His593. Positions Asp614–Gly617 are G3. GTP-binding positions include Asp614–His618 and Asn668–Asp671. Positions Asn668–Asp671 are G4. The tract at residues Ser704–Arg706 is G5.

The protein belongs to the TRAFAC class translation factor GTPase superfamily. Classic translation factor GTPase family. IF-2 subfamily.

The protein resides in the cytoplasm. In terms of biological role, one of the essential components for the initiation of protein synthesis. Protects formylmethionyl-tRNA from spontaneous hydrolysis and promotes its binding to the 30S ribosomal subunits. Also involved in the hydrolysis of GTP during the formation of the 70S ribosomal complex. The polypeptide is Translation initiation factor IF-2 (Frankia casuarinae (strain DSM 45818 / CECT 9043 / HFP020203 / CcI3)).